The following is a 101-amino-acid chain: MPRKSVQEREKKRLRLINKYFLRRSLLRKCVVDLKVSSEERWNAVLKLQTLPRDSSPSRLRNRCGRTGRPHAFLRKFGLSRMKVREAAMKGEIPGLRKSSW.

Belongs to the universal ribosomal protein uS14 family. As to quaternary structure, part of the 30S ribosomal subunit. Contacts proteins S3 and S10.

In terms of biological role, binds 16S rRNA, required for the assembly of 30S particles and may also be responsible for determining the conformation of the 16S rRNA at the A site. The sequence is that of Small ribosomal subunit protein uS14 from Blochmanniella floridana.